The primary structure comprises 338 residues: Phosphate transport system permease protein PstC 1 (338 aa).

8 helical membrane passes run 19 to 39, 93 to 113, 123 to 143, 144 to 164, 181 to 201, 232 to 252, 254 to 274, and 295 to 315; these read GGIGAVIPLLALVLVLVVLVI, TSAIALIIAVPVSVGAALVIV, AVGIVLELLAGIPSVVVGLWG, AMTFGPFIAHHIAPVIAHNAP, GMLVSGLVLAVMVVPIIATTT, LPWVSSGIVGAVVLGLGRALG, TMAVAMVSGAVLGAMPANIYA, and TNFAVKTLAEVGLVLMVITLL. In terms of domain architecture, ABC transmembrane type-1 spans 87–320; the sequence is IVGTLATSAI…VITLLTNVAA (234 aa).

Belongs to the binding-protein-dependent transport system permease family. CysTW subfamily.

It is found in the cell membrane. In terms of biological role, part of the binding-protein-dependent transport system for phosphate; probably responsible for the translocation of the substrate across the membrane. The sequence is that of Phosphate transport system permease protein PstC 1 (pstC1) from Mycobacterium bovis (strain ATCC BAA-935 / AF2122/97).